We begin with the raw amino-acid sequence, 167 residues long: MIEELHQEVSDRGFLLTSADKLVNWGRSMSMWPMTFGLACCAVEMMNAGASRYDLDRFGVVFRGSPRQSDVIIVAGTLTNKMAPALRKVYDQMPEPRYVISMGSCANGGGYYHYSYSVVRGCDRILPVDVYIPGCPPTAEAVMYGIMQLQKKINREGQVYSGWRKRV.

Cys40, Cys41, Cys105, and Cys135 together coordinate [4Fe-4S] cluster.

It belongs to the complex I 20 kDa subunit family. NDH-1 is composed of 14 different subunits. Subunits NuoB, C, D, E, F, and G constitute the peripheral sector of the complex. [4Fe-4S] cluster serves as cofactor.

The protein localises to the cell inner membrane. It carries out the reaction a quinone + NADH + 5 H(+)(in) = a quinol + NAD(+) + 4 H(+)(out). In terms of biological role, NDH-1 shuttles electrons from NADH, via FMN and iron-sulfur (Fe-S) centers, to quinones in the respiratory chain. The immediate electron acceptor for the enzyme in this species is believed to be ubiquinone. Couples the redox reaction to proton translocation (for every two electrons transferred, four hydrogen ions are translocated across the cytoplasmic membrane), and thus conserves the redox energy in a proton gradient. The polypeptide is NADH-quinone oxidoreductase subunit B (Magnetococcus marinus (strain ATCC BAA-1437 / JCM 17883 / MC-1)).